The primary structure comprises 720 residues: Ornithine decarboxylase (720 aa).

Lysine 354 carries the post-translational modification N6-(pyridoxal phosphate)lysine.

It belongs to the Orn/Lys/Arg decarboxylase class-I family. Pyridoxal 5'-phosphate is required as a cofactor.

The catalysed reaction is L-ornithine + H(+) = putrescine + CO2. The sequence is that of Ornithine decarboxylase (speF) from Haemophilus influenzae (strain ATCC 51907 / DSM 11121 / KW20 / Rd).